The following is a 352-amino-acid chain: UPF0324 membrane protein blr3189 (352 aa).

A run of 11 helical transmembrane segments spans residues 21 to 43 (IAAL…LLER), 53 to 71 (YVEA…RSFW), 88 to 110 (LLEV…ASGI), 114 to 136 (ASIA…LLGL), 143 to 165 (LIAC…IIGA), 175 to 197 (SFTA…LLQL), 204 to 226 (ILAG…AGLV), 236 to 253 (LMRV…SLVA), 265 to 284 (VGFF…LATL), 294 to 316 (VVGP…LGLG), and 329 to 351 (VTAA…VHWF).

The protein belongs to the UPF0324 family.

The protein resides in the cell membrane. In Bradyrhizobium diazoefficiens (strain JCM 10833 / BCRC 13528 / IAM 13628 / NBRC 14792 / USDA 110), this protein is UPF0324 membrane protein blr3189.